A 692-amino-acid polypeptide reads, in one-letter code: Glycine--tRNA ligase beta subunit (692 aa).

This sequence belongs to the class-II aminoacyl-tRNA synthetase family. In terms of assembly, tetramer of two alpha and two beta subunits.

It is found in the cytoplasm. It catalyses the reaction tRNA(Gly) + glycine + ATP = glycyl-tRNA(Gly) + AMP + diphosphate. This is Glycine--tRNA ligase beta subunit from Alteromonas mediterranea (strain DSM 17117 / CIP 110805 / LMG 28347 / Deep ecotype).